The sequence spans 307 residues: Ubiquitin recognition factor in ER-associated degradation protein 1 (307 aa).

N-acetylmethionine is present on M1. Phosphoserine occurs at positions 129, 231, 245, 247, and 299. Disordered regions lie at residues 230-255 and 288-307; these read GSGNRLDGKKKGVEPSPSPIKPGDIK and GRFIAFSGEGQSLRKKGRKP.

The protein belongs to the UFD1 family. In terms of assembly, heterodimer with NPLOC4, this heterodimer binds VCP and inhibits Golgi membrane fusion. Interacts with USP13. Interacts with ZFAND2B; probably through VCP.

It is found in the nucleus. The protein localises to the cytoplasm. It localises to the cytosol. It participates in protein degradation; proteasomal ubiquitin-dependent pathway. Functionally, essential component of the ubiquitin-dependent proteolytic pathway which degrades ubiquitin fusion proteins. The ternary complex containing UFD1, VCP and NPLOC4 binds ubiquitinated proteins and is necessary for the export of misfolded proteins from the ER to the cytoplasm, where they are degraded by the proteasome. The NPLOC4-UFD1-VCP complex regulates spindle disassembly at the end of mitosis and is necessary for the formation of a closed nuclear envelope. It may be involved in the development of some ectoderm-derived structures. Acts as a negative regulator of type I interferon production via the complex formed with VCP and NPLOC4, which binds to RIGI and recruits RNF125 to promote ubiquitination and degradation of RIGI. The sequence is that of Ubiquitin recognition factor in ER-associated degradation protein 1 from Mus musculus (Mouse).